The chain runs to 640 residues: EF-hand domain-containing protein 1 (640 aa).

The segment at 1–45 (MVSNPVHGLPFLPGTSFKDSTKTAFHRSQTLSYRNGYAIVRRPTV) is required for its localization in the mitotic spindle and interaction with alpha-tubulin. 3 consecutive DM10 domains span residues 93–198 (DKKV…ESQG), 239–359 (DKQV…KEKF), and 416–520 (DNKV…ESNA). Residues 535 to 554 (VRKREAPAPEAESKQTEKDP) form a disordered region. The span at 538-554 (REAPAPEAESKQTEKDP) shows a compositional bias: basic and acidic residues. An EF-hand domain is found at 574-609 (SCKDNIREAFQIYDKEASGYVDRDMFFKICESLNVP).

As to quaternary structure, microtubule inner protein component of sperm flagellar doublet microtubules. Interacts with the C-terminus of CACNA1E. Interacts with alpha-tubulin. Widely expressed. Not detected in lymphocytes.

It is found in the cytoplasm. Its subcellular location is the cytoskeleton. The protein localises to the cilium axoneme. It localises to the flagellum axoneme. The protein resides in the microtubule organizing center. It is found in the centrosome. Its subcellular location is the spindle. The protein localises to the spindle pole. Functionally, microtubule inner protein (MIP) part of the dynein-decorated doublet microtubules (DMTs) in cilia axoneme, which is required for motile cilia beating. Microtubule-associated protein which regulates cell division and neuronal migration during cortical development. Necessary for radial and tangential cell migration during brain development, possibly acting as a regulator of cell morphology and process formation during migration. May enhance calcium influx through CACNA1E and stimulate programmed cell death. In Homo sapiens (Human), this protein is EF-hand domain-containing protein 1.